Reading from the N-terminus, the 276-residue chain is Formamidopyrimidine-DNA glycosylase (276 aa).

Residue P2 is the Schiff-base intermediate with DNA of the active site. E3 serves as the catalytic Proton donor. The active-site Proton donor; for beta-elimination activity is the K59. 3 residues coordinate DNA: H92, R111, and K155. The FPG-type zinc finger occupies 239 to 273 (AVYGQTGAPCPRCGTAIEKIKVGGRGTHFCPTCQQ). R263 functions as the Proton donor; for delta-elimination activity in the catalytic mechanism.

The protein belongs to the FPG family. As to quaternary structure, monomer. Zn(2+) serves as cofactor.

The enzyme catalyses Hydrolysis of DNA containing ring-opened 7-methylguanine residues, releasing 2,6-diamino-4-hydroxy-5-(N-methyl)formamidopyrimidine.. The catalysed reaction is 2'-deoxyribonucleotide-(2'-deoxyribose 5'-phosphate)-2'-deoxyribonucleotide-DNA = a 3'-end 2'-deoxyribonucleotide-(2,3-dehydro-2,3-deoxyribose 5'-phosphate)-DNA + a 5'-end 5'-phospho-2'-deoxyribonucleoside-DNA + H(+). Involved in base excision repair of DNA damaged by oxidation or by mutagenic agents. Acts as a DNA glycosylase that recognizes and removes damaged bases. Has a preference for oxidized purines, such as 7,8-dihydro-8-oxoguanine (8-oxoG). Has AP (apurinic/apyrimidinic) lyase activity and introduces nicks in the DNA strand. Cleaves the DNA backbone by beta-delta elimination to generate a single-strand break at the site of the removed base with both 3'- and 5'-phosphates. The polypeptide is Formamidopyrimidine-DNA glycosylase (Exiguobacterium sibiricum (strain DSM 17290 / CCUG 55495 / CIP 109462 / JCM 13490 / 255-15)).